Consider the following 298-residue polypeptide: Spermidine synthase (298 aa).

The PABS domain maps to 13–248 (DGWFREINNM…GSIGFVVASK (236 aa)). Residue glutamine 44 coordinates S-adenosyl 3-(methylsulfanyl)propylamine. Putrescine is bound at residue tyrosine 74. S-adenosyl 3-(methylsulfanyl)propylamine is bound by residues glutamine 75, aspartate 99, aspartate 119, 150–151 (DG), and aspartate 168. Aspartate 168 (proton acceptor) is an active-site residue. Residues 168-171 (DSSD) and tyrosine 236 each bind putrescine.

Belongs to the spermidine/spermine synthase family.

The enzyme catalyses S-adenosyl 3-(methylsulfanyl)propylamine + putrescine = S-methyl-5'-thioadenosine + spermidine + H(+). Its pathway is amine and polyamine biosynthesis; spermidine biosynthesis; spermidine from putrescine: step 1/1. In Schizosaccharomyces pombe (strain 972 / ATCC 24843) (Fission yeast), this protein is Spermidine synthase.